Here is a 201-residue protein sequence, read N- to C-terminus: Sterile alpha motif domain-containing protein 12 (201 aa).

The SAM domain maps to 77 to 143; sequence WTQQDVCKWL…LQQVLQLKVR (67 aa).

This chain is Sterile alpha motif domain-containing protein 12 (SAMD12), found in Pongo abelii (Sumatran orangutan).